A 434-amino-acid chain; its full sequence is Evolutionarily conserved signaling intermediate in Toll pathway, mitochondrial (434 aa).

The N-terminal 48 residues, 1–48, are a transit peptide targeting the mitochondrion; it reads MSWVQVNLLARGLSRGWGSICRTVLSGTPFAQPSLQARGLHCSAVTHK. Residue Lys-371 forms a Glycyl lysine isopeptide (Lys-Gly) (interchain with G-Cter in ubiquitin) linkage. The tract at residues 403–434 is disordered; the sequence is TRLEGQSPPHSPPKGPEEDDEAIQAQQRQGQS.

It belongs to the ECSIT family. As to quaternary structure, interacts with MAP3K1, SMAD4 and TRAF6. Interacts with SMAD1 only after BMP4-treatment. Part of the mitochondrial complex I assembly/MCIA complex that comprises at least the core subunits TMEM126B, NDUFAF1, ECSIT and ACAD9 and complement subunits such as COA1 and TMEM186. Interacts with NDUFAF1. Interacts with ACAD9. Interacts with TRIM59. Interacts with TMEM70 and TMEM242. Interacts (when ubiquitinated) with NF-kappa-B subunits RELA and NFKB1. Interacts with RIGI, IFIT1 and MAVS; these interactions promote RLR-mediated type I IFN induction. Interacts with SQSTM1; this interaction inhibits TLR4 signaling via functional regulation of the TRAF6-ECSIT complex. Interacts with cereblon/CRBN; this interaction inhibits the ubiquitination of ECSIT. In terms of processing, ubiquitinated on Lys-371; leading to translocation in the nucleus together with RELA and NFKB1 and expression of NF-kappa-B-dependent genes.

The protein resides in the cytoplasm. The protein localises to the nucleus. It localises to the mitochondrion. Its function is as follows. Adapter protein that plays a role in different signaling pathways including TLRs and IL-1 pathways or innate antiviral induction signaling. Plays a role in the activation of NF-kappa-B by forming a signal complex with TRAF6 and TAK1/MAP3K7 to activate TAK1/MAP3K7 leading to activation of IKKs. Once ubiquitinated, interacts with the dissociated RELA and NFKB1 proteins and translocates to the nucleus where it induces NF-kappa-B-dependent gene expression. Plays a role in innate antiviral immune response by bridging the pattern recognition receptors RIGI and MDA5/IFIT1 to the MAVS complex at the mitochondrion. Promotes proteolytic activation of MAP3K1. Involved in the BMP signaling pathway. Required for normal embryonic development. In terms of biological role, as part of the MCIA complex, involved in the assembly of the mitochondrial complex I. In Rattus norvegicus (Rat), this protein is Evolutionarily conserved signaling intermediate in Toll pathway, mitochondrial.